The chain runs to 82 residues: Cortexin-1 (82 aa).

Positions 1–20 (MSSAWTLSPEPLPPSTGPPV) are disordered. The chain crosses the membrane as a helical span at residues 30 to 50 (TVFAFVLCLLVVLVLLMVRCV).

It belongs to the cortexin family.

It localises to the membrane. May mediate extracellular or intracellular signaling of cortical neurons during forebrain development. This chain is Cortexin-1 (Ctxn1), found in Mus musculus (Mouse).